The primary structure comprises 360 residues: Aspartate beta-hydroxylase domain-containing protein 1 (360 aa).

Residues 1 to 45 lie on the Cytoplasmic side of the membrane; the sequence is MWKGGNQEAVIEGSGGELGVPGSWGLQDAACHLARASLPIMFPWP. Residues 46-68 form a helical membrane-spanning segment; it reads LPLGSSALTMLLGALTSLFLWYC. Over 69-360 the chain is Lumenal; it reads YRLGSQDMQA…ALDFVFAPDP (292 aa).

The protein belongs to the aspartyl/asparaginyl beta-hydroxylase family.

The protein localises to the membrane. The protein is Aspartate beta-hydroxylase domain-containing protein 1 (Asphd1) of Mus musculus (Mouse).